Consider the following 346-residue polypeptide: Ribonucleoside-diphosphate reductase subunit beta (346 aa).

3 residues coordinate Fe cation: E89, E120, and H123. Y129 is a catalytic residue. Residues E193, E227, and H230 each coordinate Fe cation.

It belongs to the ribonucleoside diphosphate reductase small chain family. As to quaternary structure, tetramer of two alpha and two beta subunits. Fe cation serves as cofactor.

The catalysed reaction is a 2'-deoxyribonucleoside 5'-diphosphate + [thioredoxin]-disulfide + H2O = a ribonucleoside 5'-diphosphate + [thioredoxin]-dithiol. Provides the precursors necessary for DNA synthesis. Catalyzes the biosynthesis of deoxyribonucleotides from the corresponding ribonucleotides. This Chlamydia trachomatis serovar D (strain ATCC VR-885 / DSM 19411 / UW-3/Cx) protein is Ribonucleoside-diphosphate reductase subunit beta (nrdB).